A 495-amino-acid chain; its full sequence is Glycerol kinase (495 aa).

Thr-11 lines the ADP pocket. The ATP site is built by Thr-11, Thr-12, and Ser-13. Residue Thr-11 coordinates sn-glycerol 3-phosphate. Arg-15 lines the ADP pocket. Residues Arg-81, Glu-82, Tyr-133, and Asp-242 each contribute to the sn-glycerol 3-phosphate site. The glycerol site is built by Arg-81, Glu-82, Tyr-133, Asp-242, and Gln-243. 2 residues coordinate ADP: Thr-264 and Gly-307. Residues Thr-264, Gly-307, Gln-311, and Gly-409 each coordinate ATP. Gly-409 and Asn-413 together coordinate ADP.

Belongs to the FGGY kinase family.

The enzyme catalyses glycerol + ATP = sn-glycerol 3-phosphate + ADP + H(+). Its pathway is polyol metabolism; glycerol degradation via glycerol kinase pathway; sn-glycerol 3-phosphate from glycerol: step 1/1. With respect to regulation, inhibited by fructose 1,6-bisphosphate (FBP). Key enzyme in the regulation of glycerol uptake and metabolism. Catalyzes the phosphorylation of glycerol to yield sn-glycerol 3-phosphate. The polypeptide is Glycerol kinase (Borrelia hermsii (strain HS1 / DAH)).